The primary structure comprises 254 residues: Probable phosphatase Shew185_1467 (254 aa).

Zn(2+) contacts are provided by H8, H10, H16, H41, E74, H102, H132, D193, and H195.

This sequence belongs to the PHP family. Zn(2+) is required as a cofactor.

The chain is Probable phosphatase Shew185_1467 from Shewanella baltica (strain OS185).